The sequence spans 686 residues: MAM domain-containing protein 2 (686 aa).

Residues 1 to 18 (MLLRGVLLALQALQLAGA) form the signal peptide. MAM domains follow at residues 24-169 (GSCA…YCIE), 168-329 (IECD…HCQN), 340-498 (ASCN…SCSS), and 507-666 (GECT…PCGE). Residues Asn134 and Asn329 are each glycosylated (N-linked (GlcNAc...) asparagine). Disordered regions lie at residues 521-543 (EKRNRSSWHRRRGETPTSYTGPK) and 665-686 (GEMEDTTQQSSGYSEDLNEIEY). Residue Asn524 is glycosylated (N-linked (GlcNAc...) asparagine).

O-glycosylated.

It localises to the secreted. The protein resides in the extracellular space. Its subcellular location is the extracellular matrix. The protein is MAM domain-containing protein 2 (MAMDC2) of Homo sapiens (Human).